A 382-amino-acid chain; its full sequence is Inactive ubiquitin-specific protease 5 (382 aa).

Residues 16-141 (VPAEEERALI…GGPTLPRKAI (126 aa)) enclose the DUSP domain. The 60-residue stretch at 323 to 382 (TGLLNLGNTCFMNSAIQCLVHTPEFARYFREDYHREINWQNPLGMVVSTLSTSMALKPYV) folds into the USP domain.

This sequence belongs to the peptidase C19 family. As to expression, widely expressed with the highest expression in floral organs.

It is found in the cell membrane. Its function is as follows. Plays an important role in the development of floral organs and chloroplasts. Does not possess deubiquitinating enzyme activity in vitro. The polypeptide is Inactive ubiquitin-specific protease 5 (Oryza sativa subsp. japonica (Rice)).